The sequence spans 369 residues: Maltose/maltodextrin import ATP-binding protein MalK (369 aa).

The region spanning 4-234 (VTLHNVSKAY…PVNRFVASFI (231 aa)) is the ABC transporter domain. 36 to 43 (GPSGCGKS) is a binding site for ATP.

It belongs to the ABC transporter superfamily. Maltooligosaccharide importer (TC 3.A.1.1.1) family. As to quaternary structure, the complex is composed of two ATP-binding proteins (MalK), two transmembrane proteins (MalG and MalK) and a solute-binding protein (MalE).

Its subcellular location is the cell inner membrane. It carries out the reaction D-maltose(out) + ATP + H2O = D-maltose(in) + ADP + phosphate + H(+). Functionally, part of the ABC transporter complex MalEFGK involved in maltose/maltodextrin import. Responsible for energy coupling to the transport system. The polypeptide is Maltose/maltodextrin import ATP-binding protein MalK (Photorhabdus laumondii subsp. laumondii (strain DSM 15139 / CIP 105565 / TT01) (Photorhabdus luminescens subsp. laumondii)).